A 518-amino-acid polypeptide reads, in one-letter code: MAKFVIAGRADCPYYAKTELVADYLQKNLPDFRIHKITQRPEVWEDWLKDVCEKNKWSHKNSPIIWRELLDRGGKGLLLGGYNEFLEHAQLYYDVTSSMTTELMMVIAQENLGAHIEKEQEEEALKTCINPLQVWITSASAPACYNLIPILTSGEVFGMHTEISITLFDNKQAEEHLKSLVVETQDLASPVLRSVSICTKVEEAFRQAHVIVVLDDSTNKEVFTLEDCLRSRVPLCRLYGYLIEKNAHESVRVIVGGRTFVNLKTVLLMRYAPRIAHNIIAVALGVEGEAKAILARKLKTAPSYIKDVIIWGNISGNNYVDLRKTRVYRYESAIWGPLHYSRPVLNLIFDSEWVKREFVAILKNLTTTGRQFGGILAAHSIATTLKYWYHGSPPGEIVSLGILSEGQFGIPKGIVFSMPVKFENGTWVVLTDLKDVEISEQIMTRMTSDLIQEKLVALGDKIHFQPYQSGHKDLVPDEEKNLAMSDAAEFPNQIPQTTFEKPQSLEFLNEFEGKTVES.

It belongs to the LDH/MDH superfamily. MDH type 2 family.

The chain is Putative malate dehydrogenase 1B (MDH1B) from Homo sapiens (Human).